We begin with the raw amino-acid sequence, 636 residues long: MVSEMLEEIKRTIMQRLPERVQVAKVEFEGPEVVIYTKNPEIITENGNLIRDIAKDIRKRIIIRSDRSVLMDPEKAIRKIHEIVPEEAKITNISFDDVTCEVIIEARKPGLVIGKYGSTSREIVKNTGWAPKILRTPPISSEIIERIRRTLRKNSKERKKILQQLGNRIHQKPKYDNDWARLTAMGGFREVGRSCLYLQTPNSRVLLDCGVNVAGGDDKNSYPYLNVPEFTLDSLDAVIITHAHLDHSGFLPYLYHYGYDGPVYCTAPTRDLMTLLQLDHIDIAHREDEPLPFNVKHVKKSVKHTITLDYGEVTDIAPDIRLTLHNAGHILGSAMAHLHIGDGQHNMVYTGDFKYEQSRLLEAAANRFPRIETLVMESTYGGHEDVQPSRNRAEKELVKTIYSTLRRGGKILIPVFAVGRAQELMIVLEEYIRTGIIDEVPVYIDGMIWEANAIHTARPEYLSKDLRDQIFHMGHNPFISDIFHKVNGMDERREIVEGEPSIILSTSGMLTGGNSLEYFKWLCEDPDNSLVFVGYQAEGSLGRRIQKGWKEIPLKDEDDKMRVYNVRMNIKTIEGFSGHSDRRQLMEYVKRISPKPEKILLCHGDNYKTLDLASSIYRTYRIETKTPLNLETVRIQ.

The KHa stretch occupies residues 3 to 70 (SEMLEEIKRT…IIIRSDRSVL (68 aa)). Positions 71–138 (MDPEKAIRKI…WAPKILRTPP (68 aa)) are KHb. The tract at residues 179–383 (WARLTAMGGF…LVMESTYGGH (205 aa)) is metallo-beta-lactamase N-terminus. Zn(2+) is bound by residues histidine 242, histidine 244, aspartate 246, histidine 247, histidine 329, and aspartate 352. Residues 384-577 (EDVQPSRNRA…MNIKTIEGFS (194 aa)) are beta-Casp. Residues 578–636 (GHSDRRQLMEYVKRISPKPEKILLCHGDNYKTLDLASSIYRTYRIETKTPLNLETVRIQ) are metallo-beta-lactamase C-terminus. Position 603 (histidine 603) interacts with Zn(2+).

The protein belongs to the metallo-beta-lactamase superfamily. RNA-metabolizing metallo-beta-lactamase-like family. FttA subfamily. As to quaternary structure, homodimer. Interacts with RNA polymerase (RNAP), interacts with the Spt4-Spt5 complex. Does not seem to interact with the RNA degrading exosome. The cofactor is Zn(2+).

Its activity is regulated as follows. Most active at 0.5 M or 0.7 M NaCl, less active at 1.0 M NaCl. Nuclease activity is inhibited by N,N,Tetrakis-(2-pyridylmethyl)-ethylene diamine (TPEN), a specific chelator of zinc ions. Functionally, terminates transcription on the whole genome. Termination is linked to FttA-mediated RNA cleavage and does not require NTP hydrolysis. Cleaves endonucleolytically at the RNA exit channel of RNA polymerase (RNAP); the 5'-3' exonuclease activity of this protein degrades the nascent RNA released from RNAP. Its function is as follows. An RNA nuclease, it bind single-stranded RNA (ssRNA) with a preference for U-rich sequences. This is Transcription termination factor FttA from Methanothermobacter thermautotrophicus (strain ATCC 29096 / DSM 1053 / JCM 10044 / NBRC 100330 / Delta H) (Methanobacterium thermoautotrophicum).